The following is a 945-amino-acid chain: Poly [ADP-ribose] polymerase 1 (945 aa).

The PARP-type 1 zinc-finger motif lies at 10–96; that stretch reads YAIEYAKSGR…KLRQEIQHFK (87 aa). Cysteine 22, cysteine 25, histidine 54, and cysteine 57 together coordinate Zn(2+). Residues 117-183 form a PARP-type 2; degenerate zinc finger; that stretch reads IKTEKSLSNR…DYEENFKIKA (67 aa). The segment at 195–251 is disordered; sequence RRSTEPATPASASPTPPEAETPVLSAEGSPESSNKRPASSEIIEIDGEGNPDENDFA. Positions 237-248 are enriched in acidic residues; sequence IEIDGEGNPDEN. A PADR1 zinc-binding domain is found at 258 to 397; sequence KEARLMEVQK…NQMSERLYIG (140 aa). The segment at 324-369 is zinc ribbon; the sequence is GCPIICQTCSNGKIVYNSSCRTYVCTGYATEYSKCTYESKNPIRTP. The Zn(2+) site is built by cysteine 329, cysteine 332, cysteine 348, and cysteine 358. The 100-residue stretch at 464 to 563 folds into the WGR domain; the sequence is RCHVFKNEID…KHFRKMPGMF (100 aa). The PARP alpha-helical domain maps to 586–704; sequence KTLLPKSVKE…DIKFAYDQIS (119 aa). Residues 717–945 form the PARP catalytic domain; sequence DPVDINYQKL…RVKMHHARHL (229 aa).

The protein belongs to the ARTD/PARP family.

It is found in the nucleus. It carries out the reaction NAD(+) + (ADP-D-ribosyl)n-acceptor = nicotinamide + (ADP-D-ribosyl)n+1-acceptor + H(+).. The catalysed reaction is L-aspartyl-[protein] + NAD(+) = 4-O-(ADP-D-ribosyl)-L-aspartyl-[protein] + nicotinamide. It catalyses the reaction L-glutamyl-[protein] + NAD(+) = 5-O-(ADP-D-ribosyl)-L-glutamyl-[protein] + nicotinamide. Its activity is regulated as follows. Inhibited by N-(6-oxo-5,6-dihydrophenanthridin-2-yl)-N,N-dimethylacetamide HCl (PJ34), 1,5-dihydroxyisoquinoline (DHQ) and 3-aminobenzamide (3AB). In terms of biological role, poly[ADP-ribose] polymerase modifies various nuclear proteins by poly(ADP-ribosyl)ation, a post-translational modification synthesized after DNA damage that appears as an obligatory step in a detection/signaling pathway leading to the reparation of DNA strand breaks and programmed cell death. Involved in protection of the genome against mutations. This chain is Poly [ADP-ribose] polymerase 1, found in Caenorhabditis elegans.